A 434-amino-acid chain; its full sequence is UPF0597 protein CLB_1949 (434 aa).

This sequence belongs to the UPF0597 family.

The sequence is that of UPF0597 protein CLB_1949 from Clostridium botulinum (strain ATCC 19397 / Type A).